A 471-amino-acid chain; its full sequence is Ribulose bisphosphate carboxylase large chain (471 aa).

The substrate site is built by Asn-115 and Thr-165. Lys-167 functions as the Proton acceptor in the catalytic mechanism. Substrate is bound at residue Lys-169. Mg(2+)-binding residues include Lys-193, Asp-195, and Glu-196. The residue at position 193 (Lys-193) is an N6-carboxylysine. The active-site Proton acceptor is the His-286. 3 residues coordinate substrate: Arg-287, His-319, and Ser-371.

The protein belongs to the RuBisCO large chain family. Type I subfamily. Heterohexadecamer of 8 large chains and 8 small chains. Requires Mg(2+) as cofactor.

The protein localises to the carboxysome. The catalysed reaction is 2 (2R)-3-phosphoglycerate + 2 H(+) = D-ribulose 1,5-bisphosphate + CO2 + H2O. The enzyme catalyses D-ribulose 1,5-bisphosphate + O2 = 2-phosphoglycolate + (2R)-3-phosphoglycerate + 2 H(+). Its function is as follows. RuBisCO catalyzes two reactions: the carboxylation of D-ribulose 1,5-bisphosphate, the primary event in carbon dioxide fixation, as well as the oxidative fragmentation of the pentose substrate in the photorespiration process. Both reactions occur simultaneously and in competition at the same active site. The polypeptide is Ribulose bisphosphate carboxylase large chain (Synechococcus sp. (strain RCC307)).